We begin with the raw amino-acid sequence, 431 residues long: Histidinol dehydrogenase 1 (431 aa).

3 residues coordinate NAD(+): tyrosine 127, glutamine 188, and asparagine 211. Residues serine 234, glutamine 256, and histidine 259 each coordinate substrate. 2 residues coordinate Zn(2+): glutamine 256 and histidine 259. Active-site proton acceptor residues include glutamate 324 and histidine 325. Residues histidine 325, aspartate 358, glutamate 412, and histidine 417 each coordinate substrate. Position 358 (aspartate 358) interacts with Zn(2+). Histidine 417 contacts Zn(2+).

It belongs to the histidinol dehydrogenase family. It depends on Zn(2+) as a cofactor.

It carries out the reaction L-histidinol + 2 NAD(+) + H2O = L-histidine + 2 NADH + 3 H(+). The protein operates within amino-acid biosynthesis; L-histidine biosynthesis; L-histidine from 5-phospho-alpha-D-ribose 1-diphosphate: step 9/9. Functionally, catalyzes the sequential NAD-dependent oxidations of L-histidinol to L-histidinaldehyde and then to L-histidine. The protein is Histidinol dehydrogenase 1 (hisD1) of Nostoc sp. (strain PCC 7120 / SAG 25.82 / UTEX 2576).